The following is a 295-amino-acid chain: Bifunctional protein FolD (295 aa).

NADP(+) is bound by residues Gly-165–Gly-167, Ser-192, and Ile-233.

It belongs to the tetrahydrofolate dehydrogenase/cyclohydrolase family. Homodimer.

The catalysed reaction is (6R)-5,10-methylene-5,6,7,8-tetrahydrofolate + NADP(+) = (6R)-5,10-methenyltetrahydrofolate + NADPH. It catalyses the reaction (6R)-5,10-methenyltetrahydrofolate + H2O = (6R)-10-formyltetrahydrofolate + H(+). Its pathway is one-carbon metabolism; tetrahydrofolate interconversion. Functionally, catalyzes the oxidation of 5,10-methylenetetrahydrofolate to 5,10-methenyltetrahydrofolate and then the hydrolysis of 5,10-methenyltetrahydrofolate to 10-formyltetrahydrofolate. This chain is Bifunctional protein FolD, found in Tropheryma whipplei (strain TW08/27) (Whipple's bacillus).